The primary structure comprises 87 residues: Phosphoribosyl-ATP pyrophosphatase (87 aa).

It belongs to the PRA-PH family.

The protein resides in the cytoplasm. The catalysed reaction is 1-(5-phospho-beta-D-ribosyl)-ATP + H2O = 1-(5-phospho-beta-D-ribosyl)-5'-AMP + diphosphate + H(+). It participates in amino-acid biosynthesis; L-histidine biosynthesis; L-histidine from 5-phospho-alpha-D-ribose 1-diphosphate: step 2/9. The protein is Phosphoribosyl-ATP pyrophosphatase of Saccharopolyspora erythraea (strain ATCC 11635 / DSM 40517 / JCM 4748 / NBRC 13426 / NCIMB 8594 / NRRL 2338).